The following is a 205-amino-acid chain: Small ribosomal subunit protein uS4 (205 aa).

The segment covering 1-12 has biased composition (basic residues); the sequence is MSKRVQAKHKLD. The disordered stretch occupies residues 1–49; it reads MSKRVQAKHKLDRRMGQNIWGRPKSPVNRREYGPGQHGQRRKGKMSDFG. The S4 RNA-binding domain maps to 94-155; it reads RRLDAVVYRS…ASRQLEIVVV (62 aa).

This sequence belongs to the universal ribosomal protein uS4 family. In terms of assembly, part of the 30S ribosomal subunit. Contacts protein S5. The interaction surface between S4 and S5 is involved in control of translational fidelity.

Its function is as follows. One of the primary rRNA binding proteins, it binds directly to 16S rRNA where it nucleates assembly of the body of the 30S subunit. Functionally, with S5 and S12 plays an important role in translational accuracy. This chain is Small ribosomal subunit protein uS4, found in Methylorubrum populi (strain ATCC BAA-705 / NCIMB 13946 / BJ001) (Methylobacterium populi).